We begin with the raw amino-acid sequence, 345 residues long: N-acetyl-gamma-glutamyl-phosphate reductase (345 aa).

C149 is an active-site residue.

This sequence belongs to the NAGSA dehydrogenase family. Type 1 subfamily.

The protein resides in the cytoplasm. It catalyses the reaction N-acetyl-L-glutamate 5-semialdehyde + phosphate + NADP(+) = N-acetyl-L-glutamyl 5-phosphate + NADPH + H(+). Its pathway is amino-acid biosynthesis; L-arginine biosynthesis; N(2)-acetyl-L-ornithine from L-glutamate: step 3/4. Its function is as follows. Catalyzes the NADPH-dependent reduction of N-acetyl-5-glutamyl phosphate to yield N-acetyl-L-glutamate 5-semialdehyde. This chain is N-acetyl-gamma-glutamyl-phosphate reductase, found in Desulforapulum autotrophicum (strain ATCC 43914 / DSM 3382 / VKM B-1955 / HRM2) (Desulfobacterium autotrophicum).